Consider the following 82-residue polypeptide: Small ribosomal subunit protein bS18 (82 aa).

The disordered stretch occupies residues 1 to 20 (MSEASSAPVRRPFHRRRKTC).

The protein belongs to the bacterial ribosomal protein bS18 family. Part of the 30S ribosomal subunit. Forms a tight heterodimer with protein bS6.

Binds as a heterodimer with protein bS6 to the central domain of the 16S rRNA, where it helps stabilize the platform of the 30S subunit. In Rhizobium etli (strain CIAT 652), this protein is Small ribosomal subunit protein bS18.